A 359-amino-acid chain; its full sequence is DNA integrity scanning protein DisA (359 aa).

Residues Asp7 to Ser145 enclose the DAC domain. ATP-binding positions include Gly74, Leu92, and Thr105–Thr109.

Belongs to the DisA family. In terms of assembly, homooctamer. It depends on Mg(2+) as a cofactor.

It carries out the reaction 2 ATP = 3',3'-c-di-AMP + 2 diphosphate. Participates in a DNA-damage check-point. DisA forms globular foci that rapidly scan along the chromosomes searching for lesions. Its function is as follows. Also has diadenylate cyclase activity, catalyzing the condensation of 2 ATP molecules into cyclic di-AMP (c-di-AMP). c-di-AMP likely acts as a signaling molecule that may couple DNA integrity with a cellular process. The sequence is that of DNA integrity scanning protein DisA from Beutenbergia cavernae (strain ATCC BAA-8 / DSM 12333 / CCUG 43141 / JCM 11478 / NBRC 16432 / NCIMB 13614 / HKI 0122).